Here is a 176-residue protein sequence, read N- to C-terminus: Inner membrane-spanning protein YciB (176 aa).

5 helical membrane-spanning segments follow: residues 3-23 (FLFD…WGIF), 49-69 (TMLW…LVLH), 72-92 (KFIQ…LVAA), 118-138 (KLNL…LYVV), and 149-169 (FKLF…SLWL).

This sequence belongs to the YciB family.

It is found in the cell inner membrane. In terms of biological role, plays a role in cell envelope biogenesis, maintenance of cell envelope integrity and membrane homeostasis. The polypeptide is Inner membrane-spanning protein YciB (Burkholderia mallei (strain NCTC 10247)).